The primary structure comprises 315 residues: Acyl transferase (315 aa).

Active-site charge relay system residues include Ser-116, Asp-213, and His-243.

Belongs to the LuxD family.

It functions in the pathway lipid metabolism; fatty acid reduction for biolumincescence. Functionally, acyl transferase is part of the fatty acid reductase system required for aldehyde biosynthesis; it produces fatty acids for the luminescent reaction. In Photobacterium leiognathi, this protein is Acyl transferase.